The following is a 194-amino-acid chain: Peroxiredoxin 2 (194 aa).

The 159-residue stretch at 2–160 (PQLQKPAPAF…TLRLVQAFQY (159 aa)) folds into the Thioredoxin domain. The Cysteine sulfenic acid (-SOH) intermediate role is filled by Cys47. Thr193 carries the phosphothreonine modification. Ser194 carries the phosphoserine modification.

It belongs to the peroxiredoxin family. AhpC/Prx1 subfamily. In terms of assembly, homodimer; disulfide-linked, upon oxidation. 5 homodimers assemble to form a ring-like decamer. Also exists as a monomer. The enzyme can be inactivated by further oxidation of the cysteine sulfenic acid (C(P)-SOH) to sulphinic acid (C(P)-SO2H) instead of its condensation to a disulfide bond. It can be reactivated by forming a transient disulfide bond with sulfiredoxin SRXN1, which reduces the cysteine sulfinic acid in an ATP- and Mg-dependent manner. Post-translationally, conjugated to URM1, a ubiquitin-like protein. In terms of tissue distribution, detected in the head and body (at protein level).

It localises to the cytoplasm. The catalysed reaction is a hydroperoxide + [thioredoxin]-dithiol = an alcohol + [thioredoxin]-disulfide + H2O. Functionally, thiol-specific peroxidase that catalyzes the reduction of hydrogen peroxide and organic hydroperoxides to water and alcohols, respectively. Plays a role in cell protection against oxidative stress by detoxifying peroxides and as sensor of hydrogen peroxide-mediated signaling events. Might participate in the signaling cascades of growth factors and tumor necrosis factor-alpha by regulating the intracellular concentrations of H(2)O(2). Reduces an intramolecular disulfide bond in GDPD5 that gates the ability to GDPD5 to drive postmitotic motor neuron differentiation. The chain is Peroxiredoxin 2 from Drosophila melanogaster (Fruit fly).